Consider the following 88-residue polypeptide: Small ribosomal subunit protein bS20 (88 aa).

A compositionally biased stretch (basic residues) spans 1-22 (MANIKSSKKRSIQSEKKRKYNS). A disordered region spans residues 1 to 26 (MANIKSSKKRSIQSEKKRKYNSSKKS).

Belongs to the bacterial ribosomal protein bS20 family.

Binds directly to 16S ribosomal RNA. The protein is Small ribosomal subunit protein bS20 of Wigglesworthia glossinidia brevipalpis.